We begin with the raw amino-acid sequence, 234 residues long: MRLVQLSRHSIAFPSPEGALREPNGLLALGGDLSPARLLMAYQRGIFPWFSPGDPILWWSPDPRAVLWPESLHISRSMKRFHKRSPYRVTMNYAFGQVIEGCASDREEGTWITRGVVEAYHRLHELGHAHSIEVWREDELVGGMYGVAQGTLFCGESMFSRMENASKTALLVFCEEFIGHGGKLIDCQVLNDHTASLGACEIPRRNYLNYLNQMRLGRLPNNFWVPRCLFSPQE.

Belongs to the L/F-transferase family.

It localises to the cytoplasm. It catalyses the reaction N-terminal L-lysyl-[protein] + L-leucyl-tRNA(Leu) = N-terminal L-leucyl-L-lysyl-[protein] + tRNA(Leu) + H(+). The catalysed reaction is N-terminal L-arginyl-[protein] + L-leucyl-tRNA(Leu) = N-terminal L-leucyl-L-arginyl-[protein] + tRNA(Leu) + H(+). It carries out the reaction L-phenylalanyl-tRNA(Phe) + an N-terminal L-alpha-aminoacyl-[protein] = an N-terminal L-phenylalanyl-L-alpha-aminoacyl-[protein] + tRNA(Phe). Functionally, functions in the N-end rule pathway of protein degradation where it conjugates Leu, Phe and, less efficiently, Met from aminoacyl-tRNAs to the N-termini of proteins containing an N-terminal arginine or lysine. This Escherichia coli O157:H7 (strain EC4115 / EHEC) protein is Leucyl/phenylalanyl-tRNA--protein transferase.